The chain runs to 232 residues: 2,3,4,5-tetrahydropyridine-2,6-dicarboxylate N-acetyltransferase (232 aa).

The protein belongs to the transferase hexapeptide repeat family. DapH subfamily.

The catalysed reaction is (S)-2,3,4,5-tetrahydrodipicolinate + acetyl-CoA + H2O = L-2-acetamido-6-oxoheptanedioate + CoA. Its pathway is amino-acid biosynthesis; L-lysine biosynthesis via DAP pathway; LL-2,6-diaminopimelate from (S)-tetrahydrodipicolinate (acetylase route): step 1/3. Its function is as follows. Catalyzes the transfer of an acetyl group from acetyl-CoA to tetrahydrodipicolinate. The polypeptide is 2,3,4,5-tetrahydropyridine-2,6-dicarboxylate N-acetyltransferase (Streptococcus pneumoniae serotype 2 (strain D39 / NCTC 7466)).